A 1137-amino-acid polypeptide reads, in one-letter code: AP-4 complex subunit epsilon-1 (1137 aa).

Ser700 and Ser857 each carry phosphoserine. An interaction with TEPSIN region spans residues 727–1137 (SGALPVPQES…YQCQKVMEGS (411 aa)).

Belongs to the adaptor complexes large subunit family. In terms of assembly, adaptor protein complex 4 (AP-4) is a heterotetramer composed of two large adaptins (epsilon-type subunit AP4E1 and beta-type subunit AP4B1), a medium adaptin (mu-type subunit AP4M1) and a small adaptin (sigma-type AP4S1). Interacts with TEPSIN. Interacts with GRIA2; probably indirect it mediates the somatodendritic localization of GRIA2 in neurons. As to expression, widely expressed.

It localises to the golgi apparatus. The protein resides in the trans-Golgi network membrane. Component of the adaptor protein complex 4 (AP-4). Adaptor protein complexes are vesicle coat components involved both in vesicle formation and cargo selection. They control the vesicular transport of proteins in different trafficking pathways. AP-4 forms a non clathrin-associated coat on vesicles departing the trans-Golgi network (TGN) and may be involved in the targeting of proteins from the trans-Golgi network (TGN) to the endosomal-lysosomal system. It is also involved in protein sorting to the basolateral membrane in epithelial cells and the proper asymmetric localization of somatodendritic proteins in neurons. AP-4 is involved in the recognition and binding of tyrosine-based sorting signals found in the cytoplasmic part of cargos, but may also recognize other types of sorting signal. This is AP-4 complex subunit epsilon-1 from Homo sapiens (Human).